The sequence spans 786 residues: Endonuclease MutS2 (786 aa).

An ATP-binding site is contributed by G332–T339. In terms of domain architecture, Smr spans I711–K786.

Belongs to the DNA mismatch repair MutS family. MutS2 subfamily. As to quaternary structure, homodimer. Binds to stalled ribosomes, contacting rRNA.

Its function is as follows. Endonuclease that is involved in the suppression of homologous recombination and thus may have a key role in the control of bacterial genetic diversity. Acts as a ribosome collision sensor, splitting the ribosome into its 2 subunits. Detects stalled/collided 70S ribosomes which it binds and splits by an ATP-hydrolysis driven conformational change. Acts upstream of the ribosome quality control system (RQC), a ribosome-associated complex that mediates the extraction of incompletely synthesized nascent chains from stalled ribosomes and their subsequent degradation. Probably generates substrates for RQC. This Clostridium perfringens (strain SM101 / Type A) protein is Endonuclease MutS2.